The primary structure comprises 511 residues: Histidine ammonia-lyase (511 aa).

Residues 142–144 (ASG) constitute a cross-link (5-imidazolinone (Ala-Gly)). S143 carries the post-translational modification 2,3-didehydroalanine (Ser).

The protein belongs to the PAL/histidase family. Post-translationally, contains an active site 4-methylidene-imidazol-5-one (MIO), which is formed autocatalytically by cyclization and dehydration of residues Ala-Ser-Gly.

Its subcellular location is the cytoplasm. The enzyme catalyses L-histidine = trans-urocanate + NH4(+). It functions in the pathway amino-acid degradation; L-histidine degradation into L-glutamate; N-formimidoyl-L-glutamate from L-histidine: step 1/3. The sequence is that of Histidine ammonia-lyase from Brucella suis biovar 1 (strain 1330).